Consider the following 589-residue polypeptide: Aspartate--tRNA ligase (589 aa).

Position 175 (Glu175) interacts with L-aspartate. Positions 199–202 (QLFK) are aspartate. An L-aspartate-binding site is contributed by Arg221. ATP is bound by residues 221 to 223 (RDE) and Gln230. His449 contributes to the L-aspartate binding site. Residue Glu483 participates in ATP binding. Residue Arg490 coordinates L-aspartate. 535–538 (GLDR) is an ATP binding site.

Belongs to the class-II aminoacyl-tRNA synthetase family. Type 1 subfamily. In terms of assembly, homodimer.

It is found in the cytoplasm. It carries out the reaction tRNA(Asp) + L-aspartate + ATP = L-aspartyl-tRNA(Asp) + AMP + diphosphate. Catalyzes the attachment of L-aspartate to tRNA(Asp) in a two-step reaction: L-aspartate is first activated by ATP to form Asp-AMP and then transferred to the acceptor end of tRNA(Asp). The chain is Aspartate--tRNA ligase from Lysinibacillus sphaericus (strain C3-41).